A 209-amino-acid chain; its full sequence is A-type ATP synthase subunit D (209 aa).

This sequence belongs to the V-ATPase D subunit family. As to quaternary structure, has multiple subunits with at least A(3), B(3), C, D, E, F, H, I and proteolipid K(x).

The protein resides in the cell membrane. Functionally, component of the A-type ATP synthase that produces ATP from ADP in the presence of a proton gradient across the membrane. This is A-type ATP synthase subunit D from Sulfolobus acidocaldarius (strain ATCC 33909 / DSM 639 / JCM 8929 / NBRC 15157 / NCIMB 11770).